Consider the following 600-residue polypeptide: Alpha-N-acetylgalactosaminide alpha-2,6-sialyltransferase 1 (600 aa).

The Cytoplasmic portion of the chain corresponds to 1 to 14; that stretch reads MRSCLWRCRHLSQG. The helical; Signal-anchor for type II membrane protein transmembrane segment at 15–35 threads the bilayer; the sequence is VQWSLLLAVLVFFLFALPSFI. The Lumenal portion of the chain corresponds to 36–600; that stretch reads KEPQTKPSRH…PGPGTAKAKN (565 aa). Disordered stretches follow at residues 38–191 and 208–248; these read PQTK…AATT and GAVS…TQRN. Positions 46-55 are enriched in basic and acidic residues; it reads QRTENIKERS. Polar residues-rich tracts occupy residues 84 to 94, 151 to 179, and 209 to 219; these read NALNTQTQPKA, TEAQ…ASRT, and AVSTRTRQKGV. Intrachain disulfides connect cysteine 279–cysteine 362 and cysteine 365–cysteine 533. Residues asparagine 300, asparagine 311, asparagine 331, asparagine 375, and asparagine 460 are each glycosylated (N-linked (GlcNAc...) asparagine).

This sequence belongs to the glycosyltransferase 29 family. Post-translationally, glycosylated; autosialylated. In terms of tissue distribution, expression is restricted to the gastrointestinal tract. Highly expressed in goblet cells. Also expressed in various tumor cells.

It localises to the golgi apparatus membrane. It catalyses the reaction a beta-D-galactosyl-(1-&gt;3)-N-acetyl-alpha-D-galactosaminyl derivative + CMP-N-acetyl-beta-neuraminate = a beta-D-galactosyl-(1-&gt;3)-[N-acetyl-alpha-neuraminyl-(2-&gt;6)]-N-acetyl-alpha-D-galactosaminyl derivative + CMP + H(+). The enzyme catalyses a 3-O-[N-acetyl-alpha-D-galactosaminyl]-L-seryl-[protein] + CMP-N-acetyl-beta-neuraminate = a 3-O-[N-acetyl-alpha-neuraminosyl-(2-&gt;6)-N-acetyl-alpha-D-galactosaminyl]-L-seryl-[protein] + CMP + H(+). The catalysed reaction is a 3-O-[N-acetyl-alpha-D-galactosaminyl]-L-threonyl-[protein] + CMP-N-acetyl-beta-neuraminate = a 3-O-[N-acetyl-alpha-neuraminosyl-(2-&gt;6)-N-acetyl-alpha-D-galactosaminyl]-L-threonyl-[protein] + CMP + H(+). It carries out the reaction a 3-O-[beta-D-galactosyl-(1-&gt;3)-N-acetyl-alpha-D-galactosaminyl]-L-seryl-[protein] + CMP-N-acetyl-beta-neuraminate = a 3-O-{beta-D-galactosyl-(1-&gt;3)-[N-acetyl-alpha-neuraminosyl-(2-&gt;6)]-N-acetyl-alpha-D-galactosaminyl}-L-seryl-[protein] + CMP + H(+). It catalyses the reaction a 3-O-[beta-D-galactosyl-(1-&gt;3)-N-acetyl-alpha-D-galactosaminyl]-L-threonyl-[protein] + CMP-N-acetyl-beta-neuraminate = a 3-O-{beta-D-galactosyl-(1-&gt;3)-[N-acetyl-alpha-neuraminosyl-(2-&gt;6)]-N-acetyl-alpha-D-galactosaminyl}-L-threonyl-[protein] + CMP + H(+). The enzyme catalyses a 3-O-[N-acetyl-alpha-neuraminyl-(2-&gt;3)-beta-D-galactosyl-(1-&gt;3)-N-acetyl-alpha-D-galactosaminyl]-L-threonyl-[protein] + CMP-N-acetyl-beta-neuraminate = a 3-O-{alpha-Neu5Ac-(2-&gt;3)-beta-D-Gal-(1-&gt;3)-[alpha-Neu5Ac-(2-&gt;6)]-alpha-D-GalNAc}-L-threonyl-[protein] + CMP + H(+). It participates in protein modification; protein glycosylation. Its function is as follows. Protein sialyltransferase specifically expressed in goblet cells that plays a key role in intestinal host-commensal homeostasis. Conjugates sialic acid with an alpha-2-6 linkage to N-acetylgalactosamine (GalNAc) glycan chains linked to serine or threonine in glycoproteins. Catalyzes the formation of the sialyl-Tn (S-Tn) antigen, an antigen found in intestinal goblet cells, as well as ulcerative colitis (UC) and various cancers. Protein sialylation in globlet cells is essential for mucus integrity and is required to protect the intestinal mucus against excessive bacterial proteolytic degradation. In Homo sapiens (Human), this protein is Alpha-N-acetylgalactosaminide alpha-2,6-sialyltransferase 1.